The primary structure comprises 125 residues: Late histone H2A.1 (125 aa).

The segment covering 1-18 (MSGRGKGKAKGTKSKTRS) has biased composition (basic residues). The interval 1-21 (MSGRGKGKAKGTKSKTRSSRA) is disordered. Residue serine 2 is modified to N-acetylserine. At serine 2 the chain carries Phosphoserine. Position 104 is an N5-methylglutamine (glutamine 104). Lysine 119 is covalently cross-linked (Glycyl lysine isopeptide (Lys-Gly) (interchain with G-Cter in ubiquitin)).

It belongs to the histone H2A family. The nucleosome is a histone octamer containing two molecules each of H2A, H2B, H3 and H4 assembled in one H3-H4 heterotetramer and two H2A-H2B heterodimers. The octamer wraps approximately 147 bp of DNA. Post-translationally, monoubiquitination of Lys-119 gives a specific tag for epigenetic transcriptional repression. In terms of processing, phosphorylation of Ser-2 directly represses transcription.

It localises to the nucleus. It is found in the chromosome. Functionally, core component of nucleosome. Nucleosomes wrap and compact DNA into chromatin, limiting DNA accessibility to the cellular machineries which require DNA as a template. Histones thereby play a central role in transcription regulation, DNA repair, DNA replication and chromosomal stability. DNA accessibility is regulated via a complex set of post-translational modifications of histones, also called histone code, and nucleosome remodeling. The sequence is that of Late histone H2A.1 from Psammechinus miliaris (Green sea urchin).